The sequence spans 504 residues: Signal recognition particle subunit SRP54 (504 aa).

An NG domain region spans residues Met1 to Leu295. Residues Gly108–Thr115, Asp190–Arg194, and Thr248–Asp251 contribute to the GTP site. The tract at residues Gly296–Met504 is M-domain.

Belongs to the GTP-binding SRP family. SRP54 subfamily. Component of a signal recognition particle (SRP) complex that consists of a 7SL RNA molecule of 300 nucleotides and six protein subunits: SRP72, SRP68, SRP54, SRP19, SRP14 and SRP9. Interacts with RNPS1. Interacts with the SRP receptor subunit SRPRA.

It localises to the nucleus speckle. It is found in the cytoplasm. The protein localises to the endoplasmic reticulum. The catalysed reaction is GTP + H2O = GDP + phosphate + H(+). Functionally, component of the signal recognition particle (SRP) complex, a ribonucleoprotein complex that mediates the cotranslational targeting of secretory and membrane proteins to the endoplasmic reticulum (ER). As part of the SRP complex, associates with the SRP receptor (SR) component SRPRA to target secretory proteins to the endoplasmic reticulum membrane. Binds to the signal sequence of presecretory proteins when they emerge from the ribosomes. Displays basal GTPase activity, and stimulates reciprocal GTPase activation of the SR subunit SRPRA. Forms a guanosine 5'-triphosphate (GTP)-dependent complex with the SR subunit SRPRA. SR compaction and GTPase mediated rearrangement of SR drive SRP-mediated cotranslational protein translocation into the ER. Requires the presence of SRP9/SRP14 and/or SRP19 to stably interact with RNA. Plays a role in proliferation and differentiation of granulocytic cells, neutrophils migration capacity and exocrine pancreas development. The chain is Signal recognition particle subunit SRP54 from Homo sapiens (Human).